The chain runs to 155 residues: Ribosomal RNA large subunit methyltransferase H (155 aa).

Residues Leu72, Gly103, and 122–127 (LSDLTL) contribute to the S-adenosyl-L-methionine site.

The protein belongs to the RNA methyltransferase RlmH family. Homodimer.

The protein localises to the cytoplasm. The catalysed reaction is pseudouridine(1915) in 23S rRNA + S-adenosyl-L-methionine = N(3)-methylpseudouridine(1915) in 23S rRNA + S-adenosyl-L-homocysteine + H(+). Functionally, specifically methylates the pseudouridine at position 1915 (m3Psi1915) in 23S rRNA. In Paracidovorax citrulli (strain AAC00-1) (Acidovorax citrulli), this protein is Ribosomal RNA large subunit methyltransferase H.